The primary structure comprises 192 residues: Signal peptidase complex catalytic subunit SEC11C (192 aa).

At 1-28 (MVRAGAVGTHLPTSSLDIFGDLRKMNKR) the chain is on the cytoplasmic side. The chain crosses the membrane as a helical; Signal-anchor for type II membrane protein span at residues 29 to 48 (QLYYQVLNFAMIVSSALMIW). At 49–192 (KGLIVLTGSE…GAYVLLKRES (144 aa)) the chain is on the lumenal side. Residues S68, H108, and D134 each act as charge relay system in the active site. Positions 177-188 (ALVAVMGAYVLL) are C-terminal short (CTS) helix.

It belongs to the peptidase S26B family. In terms of assembly, component of the signal peptidase complex paralog C (SPC-C) composed of a catalytic subunit SEC11C and three accessory subunits SPCS1, SPCS2 and SPCS3. Within the complex, interacts with SPCS2 and SPCS3. The complex induces a local thinning of the ER membrane which is used to measure the length of the signal peptide (SP) h-region of protein substrates. This ensures the selectivity of the complex towards h-regions shorter than 18-20 amino acids. In terms of processing, may undergo processing at the N-terminus.

It localises to the endoplasmic reticulum membrane. It catalyses the reaction Cleavage of hydrophobic, N-terminal signal or leader sequences from secreted and periplasmic proteins.. Its function is as follows. Catalytic component of the signal peptidase complex (SPC) which catalyzes the cleavage of N-terminal signal sequences from nascent proteins as they are translocated into the lumen of the endoplasmic reticulum. Specifically cleaves N-terminal signal peptides that contain a hydrophobic alpha-helix (h-region) shorter than 18-20 amino acids. The protein is Signal peptidase complex catalytic subunit SEC11C (Sec11c) of Rattus norvegicus (Rat).